We begin with the raw amino-acid sequence, 372 residues long: Spermidine/putrescine import ATP-binding protein PotA (372 aa).

An ABC transporter domain is found at 11-241 (IELRSIKKSY…PANLFVARFI (231 aa)). 43 to 50 (GPSGCGKT) is an ATP binding site.

This sequence belongs to the ABC transporter superfamily. Spermidine/putrescine importer (TC 3.A.1.11.1) family. In terms of assembly, the complex is composed of two ATP-binding proteins (PotA), two transmembrane proteins (PotB and PotC) and a solute-binding protein (PotD).

The protein localises to the cell inner membrane. It carries out the reaction ATP + H2O + polyamine-[polyamine-binding protein]Side 1 = ADP + phosphate + polyamineSide 2 + [polyamine-binding protein]Side 1.. Its function is as follows. Part of the ABC transporter complex PotABCD involved in spermidine/putrescine import. Responsible for energy coupling to the transport system. In Haemophilus influenzae (strain ATCC 51907 / DSM 11121 / KW20 / Rd), this protein is Spermidine/putrescine import ATP-binding protein PotA.